Reading from the N-terminus, the 309-residue chain is Uracil phosphoribosyltransferase homolog (309 aa).

A disordered region spans residues 1–38 (MATELQCPDSMPCHNQQVNSASTPSPEQLRPGDLILDH). The span at 13 to 26 (CHNQQVNSASTPSP) shows a compositional bias: polar residues. The residue at position 25 (Ser25) is a Phosphoserine. GTP-binding positions include Arg133, Arg142, and 176–179 (EKGN). Position 186 (Arg186) interacts with 5-phospho-alpha-D-ribose 1-diphosphate. Arg203 and Arg232 together coordinate GTP. Position 238–246 (238–246 (YPILSTGNT)) interacts with 5-phospho-alpha-D-ribose 1-diphosphate. 299-301 (THF) lines the uracil pocket.

This sequence belongs to the UPRTase family. As to expression, highly expressed in leukocytes, liver, spleen and thymus, with lower expression in brain, lung and skeletal muscle.

It localises to the cytoplasm. The protein localises to the nucleus. In Homo sapiens (Human), this protein is Uracil phosphoribosyltransferase homolog (UPRT).